The chain runs to 447 residues: Alkylglycerol monooxygenase (447 aa).

The next 2 membrane-spanning stretches (helical) occupy residues 43 to 63 (ATPFFIFLILLELVISWILKG) and 111 to 131 (WDSTWTWYFTFLGVDFGYYWF). The Fatty acid hydroxylase domain maps to 119–249 (FTFLGVDFGY…LIIWDRIFGT (131 aa)). Residues 132-136 (HRMAH) carry the Histidine box-1 motif. The short motif at 145 to 149 (HQAHH) is the Histidine box-2 element. A helical transmembrane segment spans residues 170-190 (SWVFYCPLALFIPPSVFAVHI). Residues 221 to 225 (HRVHH) carry the Histidine box-3 motif. Transmembrane regions (helical) follow at residues 340 to 360 (VLQFAVMLAFYEETFANTAVL), 363 to 383 (VTLLLRIFFFILTLTSIGFLL), and 413 to 433 (IPSLSFAFEIFFSVCIAFWGV).

Belongs to the sterol desaturase family. TMEM195 subfamily. It depends on Fe cation as a cofactor. In terms of tissue distribution, highly expressed in lever and small intestine.

It is found in the endoplasmic reticulum membrane. The enzyme catalyses 1-O-(1,2-saturated-alkyl)-sn-glycerol + (6R)-L-erythro-5,6,7,8-tetrahydrobiopterin + O2 = a 1-(1-hydroxyalkyl)-sn-glycerol + (6R)-L-erythro-6,7-dihydrobiopterin + H2O. Its function is as follows. Glyceryl-ether monooxygenase that cleaves the O-alkyl bond of ether lipids. Ether lipids are essential components of brain membranes. This chain is Alkylglycerol monooxygenase (Agmo), found in Mus musculus (Mouse).